Reading from the N-terminus, the 101-residue chain is Putative RNA-binding protein RbpA (101 aa).

The RRM domain occupies 2–79; sequence SIYVGNLSYD…RDLKVNKAKP (78 aa). Residues 73-83 show a composition bias toward basic and acidic residues; that stretch reads KVNKAKPRENR. The interval 73–101 is disordered; sequence KVNKAKPRENRSGGGSFGGGRKSYGGSRY. Gly residues predominate over residues 84–101; it reads SGGGSFGGGRKSYGGSRY.

In Synechocystis sp. (strain ATCC 27184 / PCC 6803 / Kazusa), this protein is Putative RNA-binding protein RbpA (rbpA).